The primary structure comprises 225 residues: Phosphoglycolate phosphatase (225 aa).

Asp11 (nucleophile) is an active-site residue. The Mg(2+) site is built by Asp11, Asp13, and Asp174.

The protein belongs to the HAD-like hydrolase superfamily. CbbY/CbbZ/Gph/YieH family. It depends on Mg(2+) as a cofactor.

The catalysed reaction is 2-phosphoglycolate + H2O = glycolate + phosphate. The protein operates within organic acid metabolism; glycolate biosynthesis; glycolate from 2-phosphoglycolate: step 1/1. Specifically catalyzes the dephosphorylation of 2-phosphoglycolate. Is involved in the dissimilation of the intracellular 2-phosphoglycolate formed during the DNA repair of 3'-phosphoglycolate ends, a major class of DNA lesions induced by oxidative stress. The chain is Phosphoglycolate phosphatase from Nitrosococcus oceani (strain ATCC 19707 / BCRC 17464 / JCM 30415 / NCIMB 11848 / C-107).